Reading from the N-terminus, the 135-residue chain is Small ribosomal subunit protein uS9 (135 aa).

Residues Val-108–Lys-118 are compositionally biased toward basic and acidic residues. Residues Val-108–Arg-135 form a disordered region. Basic residues predominate over residues Pro-119 to Arg-135.

This sequence belongs to the universal ribosomal protein uS9 family.

In Pyrococcus abyssi (strain GE5 / Orsay), this protein is Small ribosomal subunit protein uS9 (rps9).